Reading from the N-terminus, the 331-residue chain is Ornithine carbamoyltransferase (331 aa).

Carbamoyl phosphate-binding positions include 55 to 58 (STRT), Gln-82, Arg-106, and 133 to 136 (HPTQ). L-ornithine is bound by residues Asn-166, Asp-230, and 234–235 (SM). Carbamoyl phosphate-binding positions include 272–273 (CL) and Arg-317.

The protein belongs to the aspartate/ornithine carbamoyltransferase superfamily. OTCase family.

The protein localises to the cytoplasm. The catalysed reaction is carbamoyl phosphate + L-ornithine = L-citrulline + phosphate + H(+). The protein operates within amino-acid biosynthesis; L-arginine biosynthesis; L-arginine from L-ornithine and carbamoyl phosphate: step 1/3. In terms of biological role, reversibly catalyzes the transfer of the carbamoyl group from carbamoyl phosphate (CP) to the N(epsilon) atom of ornithine (ORN) to produce L-citrulline. The chain is Ornithine carbamoyltransferase from Neisseria gonorrhoeae (strain ATCC 700825 / FA 1090).